A 540-amino-acid chain; its full sequence is Intestinal-type alkaline phosphatase 1 (540 aa).

The signal sequence occupies residues 1–20 (MQGDWVLLLLLGLRIHLSFG). D62 lines the Mg(2+) pocket. D62 and S112 together coordinate Zn(2+). S112 functions as the Phosphoserine intermediate in the catalytic mechanism. Cysteines 141 and 203 form a disulfide. N142 is a glycosylation site (N-linked (GlcNAc...) asparagine). Mg(2+) is bound at residue S175. E236, F289, and E290 together coordinate Ca(2+). An N-linked (GlcNAc...) asparagine glycan is attached at N301. D305 contacts Ca(2+). Mg(2+) is bound at residue E331. D336, H340, D377, and H378 together coordinate Zn(2+). N428 is a glycosylation site (N-linked (GlcNAc...) asparagine). Zn(2+) is bound at residue H452. C487 and C494 form a disulfide bridge. Residue N511 is the site of GPI-anchor amidated asparagine attachment. Residues 512–540 (SAITMNNVLLSLQLLVSMLLLVGTALVVS) constitute a propeptide, removed in mature form.

This sequence belongs to the alkaline phosphatase family. In terms of assembly, homodimer. Mg(2+) serves as cofactor. It depends on Zn(2+) as a cofactor. The cofactor is Ca(2+).

It localises to the cell membrane. It catalyses the reaction a phosphate monoester + H2O = an alcohol + phosphate. Alkaline phosphatase that can hydrolyze various phosphate compounds. The chain is Intestinal-type alkaline phosphatase 1 (Alpi) from Rattus norvegicus (Rat).